We begin with the raw amino-acid sequence, 555 residues long: Solute carrier family 22 member 2 (555 aa).

At 1 to 22 the chain is on the cytoplasmic side; that stretch reads MPTTVDDVLEHGGEFHFFQKQM. Residues 23-43 traverse the membrane as a helical segment; the sequence is FFLLALLSATFAPIYVGIVFL. The Extracellular segment spans residues 44–150; it reads GFTPDHRCRS…LVCANSWMLD (107 aa). N-linked (GlcNAc...) asparagine glycosylation is present at N72. A helical transmembrane segment spans residues 151 to 171; the sequence is LFQSSVNVGFFIGSMSIGYIA. The Cytoplasmic portion of the chain corresponds to 172–177; that stretch reads DRFGRK. A helical membrane pass occupies residues 178–198; it reads LCLLTTVLINAAAGVLMAISP. Topologically, residues 199 to 208 are extracellular; it reads TYTWMLIFRL. Residues 209–229 form a helical membrane-spanning segment; that stretch reads IQGLVSKAGWLIGYILITEFV. Residues 230 to 238 lie on the Cytoplasmic side of the membrane; it reads GRRYRRTVG. The chain crosses the membrane as a helical span at residues 239-259; that stretch reads IFYQVAYTVGLLVLAGVAYAL. Topologically, residues 260 to 263 are extracellular; the sequence is PHWR. The helical transmembrane segment at 264-284 threads the bilayer; it reads WLQFTVSLPNFFFLLYYWCIP. A Proline-rich sequence motif is present at residues 284 to 288; sequence PESPR. Over 285-348 the chain is Cytoplasmic; it reads ESPRWLISQN…VRTPQIRKHT (64 aa). A helical membrane pass occupies residues 349–369; sequence MILMYNWFTSSVLYQGLIMHM. Residues 370–375 are Extracellular-facing; sequence GLAGDN. The helical transmembrane segment at 376 to 396 threads the bilayer; sequence IYLDFFYSALVEFPAAFMIIL. Residues 397 to 414 are Cytoplasmic-facing; it reads TIDRIGRRYPWAASNMVA. A helical transmembrane segment spans residues 415–435; it reads GAACLASVFIPGDLQWLKIII. The Extracellular portion of the chain corresponds to 436–441; it reads SCLGRM. A helical membrane pass occupies residues 442-462; sequence GITMAYEIVCLVNAELYPTFI. Topologically, residues 463-464 are cytoplasmic; sequence RN. The helical transmembrane segment at 465–485 threads the bilayer; that stretch reads LGVHICSSMCDIGGIITPFLV. The Extracellular portion of the chain corresponds to 486–494; the sequence is YRLTNIWLE. The helical transmembrane segment at 495–515 threads the bilayer; the sequence is LPLMVFGVLGLVAGGLVLLLP. Residues 516 to 555 lie on the Cytoplasmic side of the membrane; sequence ETKGKALPETIEEAENMQRPRKNKEKMIYLQVQKLDIPLN.

It belongs to the major facilitator (TC 2.A.1) superfamily. Organic cation transporter (TC 2.A.1.19) family. In terms of processing, tyrosine phosphorylated by tyrosine-protein kinase YES1. As to expression, mainly expressed in kidney, in the cortex and medulla. Localized in testis, mostly to peritubular myoid cells and Leydig cells and also detected along the basal membrane of Sertoli cells. Expressed in brain, in neurons of the cerebral cortex and in various subcortical nuclei. In the brain, also detected in the dopaminergic regions of the substantia nigra. Expressed in tracheal and bronchial ciliated epithelium in the respiratory tract. Also detected in secretory phase endometrium, in scattered stromal cells. Expressed in spleen, placenta, small intestine and spinal cord. Weakly expressed in prostate, uterus and lung. In terms of tissue distribution, mainly expressed in kidney, bone marrow and testis. Expressed in colon, skeletal muscle, spinal cord, placenta and liver.

The protein localises to the basolateral cell membrane. It is found in the basal cell membrane. It localises to the apical cell membrane. It catalyses the reaction (R)-noradrenaline(out) = (R)-noradrenaline(in). The catalysed reaction is (R)-adrenaline(out) = (R)-adrenaline(in). It carries out the reaction serotonin(out) = serotonin(in). The enzyme catalyses dopamine(out) = dopamine(in). It catalyses the reaction histamine(out) = histamine(in). The catalysed reaction is thiamine(in) = thiamine(out). It carries out the reaction creatinine(in) = creatinine(out). The enzyme catalyses 1-methylnicotinamide(out) = 1-methylnicotinamide(in). It catalyses the reaction guanidine(out) = guanidine(in). The catalysed reaction is choline(out) = choline(in). It carries out the reaction agmatine(out) = agmatine(in). The enzyme catalyses putrescine(out) = putrescine(in). It catalyses the reaction spermidine(in) = spermidine(out). The catalysed reaction is tyramine(in) = tyramine(out). It carries out the reaction L-histidyl-L-proline diketopiperazine(in) = L-histidyl-L-proline diketopiperazine(out). The enzyme catalyses (R)-salsolinol(in) = (R)-salsolinol(out). It catalyses the reaction N-methyl-(R)-salsolinol(in) = N-methyl-(R)-salsolinol(out). The catalysed reaction is acetylcholine(in) = acetylcholine(out). It carries out the reaction prostaglandin F2alpha(out) = prostaglandin F2alpha(in). The enzyme catalyses prostaglandin E2(out) = prostaglandin E2(in). With respect to regulation, tyrosine phosphorylation of the transporter leads to activation of the transport activity. TEA uptake is activated by tyrosine phosphorylation. Inhibited by cGMP, most likely through a cGMP-binding protein that interacts with OCT2. Functionally, electrogenic voltage-dependent transporter that mediates the transport of a variety of organic cations such as endogenous bioactive amines, cationic drugs and xenobiotics. Functions as a Na(+)-independent, bidirectional uniporter. Cation cellular uptake or release is driven by the electrochemical potential, i.e. membrane potential and concentration gradient. However, may also engage electroneutral cation exchange when saturating concentrations of cation substrates are reached. Predominantly expressed at the basolateral membrane of hepatocytes and proximal tubules and involved in the uptake and disposition of cationic compounds by hepatic and renal clearance from the blood flow. Implicated in monoamine neurotransmitters uptake such as histamine, dopamine, adrenaline/epinephrine, noradrenaline/norepinephrine, serotonin and tyramine, thereby supporting a physiological role in the central nervous system by regulating interstitial concentrations of neurotransmitters. Also capable of transporting dopaminergic neuromodulators cyclo(his-pro), salsolinol and N-methyl-salsolinol, thereby involved in the maintenance of dopaminergic cell integrity in the central nervous system. Mediates the bidirectional transport of acetylcholine (ACh) at the apical membrane of ciliated cell in airway epithelium, thereby playing a role in luminal release of ACh from bronchial epithelium. Also transports guanidine and endogenous monoamines such as vitamin B1/thiamine, creatinine and N-1-methylnicotinamide (NMN). Mediates the uptake and efflux of quaternary ammonium compound choline. Mediates the bidirectional transport of polyamine agmatine and the uptake of polyamines putrescine and spermidine. Able to transport non-amine endogenous compounds such as prostaglandin E2 (PGE2) and prostaglandin F2-alpha (PGF2-alpha). Also involved in the uptake of xenobiotic 4-(4-(dimethylamino)styryl)-N-methylpyridinium (ASP). May contribute to regulate the transport of organic compounds in testis across the blood-testis-barrier. Its function is as follows. In contrast with isoform 1, not able to transport guanidine, creatinine, cimetidine and metformin. The polypeptide is Solute carrier family 22 member 2 (Homo sapiens (Human)).